The sequence spans 211 residues: Pyridoxine/pyridoxamine 5'-phosphate oxidase (211 aa).

Residues 7–10 (RREY) and Lys-65 contribute to the substrate site. FMN-binding positions include 60 to 65 (RIVLLK), 75 to 76 (YT), Arg-81, Lys-82, and Gln-104. Residues Tyr-122, Arg-126, and Ser-130 each coordinate substrate. Residues 139 to 140 (QS) and Trp-184 each bind FMN. 190 to 192 (RLH) contacts substrate. An FMN-binding site is contributed by Arg-194.

This sequence belongs to the pyridoxamine 5'-phosphate oxidase family. In terms of assembly, homodimer. It depends on FMN as a cofactor.

The catalysed reaction is pyridoxamine 5'-phosphate + O2 + H2O = pyridoxal 5'-phosphate + H2O2 + NH4(+). The enzyme catalyses pyridoxine 5'-phosphate + O2 = pyridoxal 5'-phosphate + H2O2. Its pathway is cofactor metabolism; pyridoxal 5'-phosphate salvage; pyridoxal 5'-phosphate from pyridoxamine 5'-phosphate: step 1/1. It functions in the pathway cofactor metabolism; pyridoxal 5'-phosphate salvage; pyridoxal 5'-phosphate from pyridoxine 5'-phosphate: step 1/1. Functionally, catalyzes the oxidation of either pyridoxine 5'-phosphate (PNP) or pyridoxamine 5'-phosphate (PMP) into pyridoxal 5'-phosphate (PLP). The polypeptide is Pyridoxine/pyridoxamine 5'-phosphate oxidase (Vibrio atlanticus (strain LGP32) (Vibrio splendidus (strain Mel32))).